The following is a 418-amino-acid chain: Serine hydroxymethyltransferase (418 aa).

Residues Leu-121 and 125–127 (GHL) contribute to the (6S)-5,6,7,8-tetrahydrofolate site. An N6-(pyridoxal phosphate)lysine modification is found at Lys-230. Position 355 to 357 (355 to 357 (SPF)) interacts with (6S)-5,6,7,8-tetrahydrofolate.

This sequence belongs to the SHMT family. In terms of assembly, homodimer. Requires pyridoxal 5'-phosphate as cofactor.

It is found in the cytoplasm. It catalyses the reaction (6R)-5,10-methylene-5,6,7,8-tetrahydrofolate + glycine + H2O = (6S)-5,6,7,8-tetrahydrofolate + L-serine. The protein operates within one-carbon metabolism; tetrahydrofolate interconversion. Its pathway is amino-acid biosynthesis; glycine biosynthesis; glycine from L-serine: step 1/1. Its function is as follows. Catalyzes the reversible interconversion of serine and glycine with tetrahydrofolate (THF) serving as the one-carbon carrier. This reaction serves as the major source of one-carbon groups required for the biosynthesis of purines, thymidylate, methionine, and other important biomolecules. Also exhibits THF-independent aldolase activity toward beta-hydroxyamino acids, producing glycine and aldehydes, via a retro-aldol mechanism. The protein is Serine hydroxymethyltransferase of Streptococcus pneumoniae (strain P1031).